Reading from the N-terminus, the 200-residue chain is THO complex subunit tho5 (200 aa).

Belongs to the THOC5 family. Component of the THO and TREX complexes.

The protein localises to the cytoplasm. The protein resides in the nucleus. In terms of biological role, component the THO subcomplex of the TREX complex, which operates in coupling transcription elongation to mRNA export. The THO complex is recruited to transcribed genes and moves along the gene with the elongating polymerase during transcription. THO is important for stabilizing nascent RNA in the RNA polymerase II elongation complex by preventing formation of DNA:RNA hybrids behind the elongating polymerase. The THO complex is also required to maintain TRAMP complex occupancy at sites of snoRNA transcription thus promoting exosome-mediated degradation of snoRNA precursors. This Schizosaccharomyces pombe (strain 972 / ATCC 24843) (Fission yeast) protein is THO complex subunit tho5.